The primary structure comprises 1189 residues: Phosphatidylinositol 3,4,5-trisphosphate 5-phosphatase 1 (1189 aa).

In terms of domain architecture, SH2 spans 5–101 (WNHGNITRSK…GLVTHLQYPV (97 aa)). Residues 103–117 (LEEEDTGDDPEEDTV) are compositionally biased toward acidic residues. Residues 103-132 (LEEEDTGDDPEEDTVESVVSPPELPPRNIP) are disordered. The SH3-binding 1 motif lies at 124-129 (PELPPR). S243 bears the Phosphoserine mark. Positions 870–906 (TERDESSGPKTLKSLTSHDPMKQWEVTSRAPPCSGSS) are disordered. The NPXY motif 1 motif lies at 912 to 915 (NPNY). Residue Y915 is modified to Phosphotyrosine. The disordered stretch occupies residues 922 to 1189 (GPPMPLHVKQ…PGPLGRTAMQ (268 aa)). Residues 931–943 (QTLSPDQQPTAWS) show a composition bias toward polar residues. S934 carries the post-translational modification Phosphoserine. Position 944 is a phosphotyrosine (Y944). S960 bears the Phosphoserine mark. Residues 961–971 (PPTPPGQPPIS) show a composition bias toward pro residues. T963 carries the phosphothreonine modification. The SH3-binding 2 motif lies at 969–974 (PISPKK). Position 971 is a phosphoserine (S971). Residues 1016 to 1030 (MFENPLYGSLSSFPK) form an interaction with DAB2 region. The NPXY motif 2 motif lies at 1019 to 1022 (NPLY). Position 1022 is a phosphotyrosine (Y1022). Basic and acidic residues predominate over residues 1033-1047 (PRKDQESPKMPRKEP). The short motif at 1040–1051 (PKMPRKEPPPCP) is the SH3-binding 3 element. Positions 1134 to 1145 (PPTPTPRPPLPV) are enriched in pro residues. Positions 1157–1177 (KGRDYRDNTELPHHGKHRPEE) are enriched in basic and acidic residues.

The protein belongs to the inositol 1,4,5-trisphosphate 5-phosphatase family. In terms of assembly, interacts with tyrosine phosphorylated form of SHC1. Interacts with tyrosine phosphorylated form of DOK1. Interacts with tyrosine phosphorylated form of DOK3. Interacts with tyrosine phosphorylated form of SLAMF1/CD150. Interacts with PTPN11 in response to IL-3. Interacts with receptor EPOR. Interacts with receptors MS4A2/FCER1B and FCER1G. Interacts with receptors FCGR2B and FCGR3. Interacts with receptor FCGR2A, leading to regulate gene expression during the phagocytic process. Interacts with GRB2. Interacts with PLCG1. Interacts with tyrosine kinases SRC and TEC. Interacts with c-Met/MET. Interacts with MILR1 (tyrosine-phosphorylated). Can weakly interact (via NPXY motif 2) with DAB2 (via PID domain); the interaction is impaired by tyrosine phosphorylation of the NPXY motif. Interacts with FCRL3 and FCRL6 (tyrosine phosphorylated form). Interacts (via SH2 domain) with tyrosine phosphorylated KLRC1 (via ITIM). Interacts with MPL/TPOR. Post-translationally, tyrosine phosphorylated by the members of the SRC family after exposure to a diverse array of extracellular stimuli such as cytokines, growth factors, antibodies, chemokines, integrin ligands and hypertonic and oxidative stress. Phosphorylated upon IgG receptor FCGR2B-binding. As to expression, specifically expressed in immune and hematopoietic cells. Expressed in bone marrow and blood cells. Levels vary considerably within this compartment. Present in at least 74% of immature CD34+ cells, whereas within the more mature population of CD33+ cells, it is present in only 10% of cells. Present in the majority of T-cells, while it is present in a minority of B-cells (at protein level).

Its subcellular location is the cytoplasm. The protein localises to the cell membrane. It is found in the membrane raft. It localises to the cytoskeleton. The protein resides in the membrane. The enzyme catalyses a 1,2-diacyl-sn-glycero-3-phospho-(1D-myo-inositol-3,4,5-trisphosphate) + H2O = a 1,2-diacyl-sn-glycero-3-phospho-(1D-myo-inositol-3,4-bisphosphate) + phosphate. It catalyses the reaction 1D-myo-inositol 1,3,4,5-tetrakisphosphate + H2O = 1D-myo-inositol 1,3,4-trisphosphate + phosphate. The catalysed reaction is a 1,2-diacyl-sn-glycero-3-phospho-(1D-myo-inositol-4,5-bisphosphate) + H2O = a 1,2-diacyl-sn-glycero-3-phospho-(1D-myo-inositol 4-phosphate) + phosphate. Activated upon translocation to the sites of synthesis of PtdIns(3,4,5)P3 in the membrane. Its function is as follows. Phosphatidylinositol (PtdIns) phosphatase that specifically hydrolyzes the 5-phosphate of phosphatidylinositol-3,4,5-trisphosphate (PtdIns(3,4,5)P3) to produce PtdIns(3,4)P2, thereby negatively regulating the PI3K (phosphoinositide 3-kinase) pathways. Able also to hydrolyzes the 5-phosphate of phosphatidylinositol-4,5-bisphosphate (PtdIns(4,5)P3) and inositol 1,3,4,5-tetrakisphosphate. Acts as a negative regulator of B-cell antigen receptor signaling. Mediates signaling from the FC-gamma-RIIB receptor (FCGR2B), playing a central role in terminating signal transduction from activating immune/hematopoietic cell receptor systems. Acts as a negative regulator of myeloid cell proliferation/survival and chemotaxis, mast cell degranulation, immune cells homeostasis, integrin alpha-IIb/beta-3 signaling in platelets and JNK signaling in B-cells. Regulates proliferation of osteoclast precursors, macrophage programming, phagocytosis and activation and is required for endotoxin tolerance. Involved in the control of cell-cell junctions, CD32a signaling in neutrophils and modulation of EGF-induced phospholipase C activity. Key regulator of neutrophil migration, by governing the formation of the leading edge and polarization required for chemotaxis. Modulates FCGR3/CD16-mediated cytotoxicity in NK cells. Mediates the activin/TGF-beta-induced apoptosis through its Smad-dependent expression. The sequence is that of Phosphatidylinositol 3,4,5-trisphosphate 5-phosphatase 1 (INPP5D) from Homo sapiens (Human).